Reading from the N-terminus, the 262-residue chain is Type III pantothenate kinase (262 aa).

Residue 6–13 (DVGNTNAV) participates in ATP binding. Residues Y100 and 107–110 (GADR) each bind substrate. The active-site Proton acceptor is the D109. D129 lines the K(+) pocket. T132 contacts ATP. Substrate is bound at residue T184.

It belongs to the type III pantothenate kinase family. As to quaternary structure, homodimer. Requires NH4(+) as cofactor. K(+) serves as cofactor.

Its subcellular location is the cytoplasm. The catalysed reaction is (R)-pantothenate + ATP = (R)-4'-phosphopantothenate + ADP + H(+). It functions in the pathway cofactor biosynthesis; coenzyme A biosynthesis; CoA from (R)-pantothenate: step 1/5. Catalyzes the phosphorylation of pantothenate (Pan), the first step in CoA biosynthesis. This is Type III pantothenate kinase from Bacillus cereus (strain B4264).